A 385-amino-acid polypeptide reads, in one-letter code: V-type proton ATPase subunit C (385 aa).

Belongs to the V-ATPase C subunit family. V-ATPase is a heteromultimeric enzyme made up of two complexes: the ATP-hydrolytic V1 complex and the proton translocation V0 complex. The V1 complex consists of three catalytic AB heterodimers that form a heterohexamer, three peripheral stalks each consisting of EG heterodimers, one central rotor including subunits D and F, and the regulatory subunits C and H. The proton translocation complex V0 consists of the proton transport subunit a, a ring of proteolipid subunits c9c'', rotary subunit d, subunits e and f, and the accessory subunits VhaAC45 and ATP6AP2.

In terms of biological role, subunit of the V1 complex of vacuolar(H+)-ATPase (V-ATPase), a multisubunit enzyme composed of a peripheral complex (V1) that hydrolyzes ATP and a membrane integral complex (V0) that translocates protons. V-ATPase is responsible for acidifying and maintaining the pH of intracellular compartments and in some cell types, is targeted to the plasma membrane, where it is responsible for acidifying the extracellular environment. Subunit C is necessary for the assembly of the catalytic sector of the enzyme and is likely to have a specific function in its catalytic activity. This is V-type proton ATPase subunit C from Manduca sexta (Tobacco hawkmoth).